The primary structure comprises 280 residues: uncharacterized protein (280 aa).

7 consecutive transmembrane segments (helical) span residues 6-26, 38-58, 79-99, 105-125, 144-164, 171-191, and 231-251; these read YLVI…TPLV, VLAI…YLFP, IFLL…VFLK, GVLA…ELIF, NQIY…IILW, ISFF…ALMV, and LVFI…TLFA.

It localises to the cell membrane. This is an uncharacterized protein from Mycoplasma genitalium (strain ATCC 33530 / DSM 19775 / NCTC 10195 / G37) (Mycoplasmoides genitalium).